We begin with the raw amino-acid sequence, 97 residues long: YcgL domain-containing protein Tcr_0238 (97 aa).

The region spanning 3–87 (LLVSAYKSAK…SEIEKMGDMP (85 aa)) is the YcgL domain. The segment at 78 to 97 (SEIEKMGDMPPPPEHLDNIF) is disordered.

The sequence is that of YcgL domain-containing protein Tcr_0238 from Hydrogenovibrio crunogenus (strain DSM 25203 / XCL-2) (Thiomicrospira crunogena).